The following is a 385-amino-acid chain: MAAALFVLLGFALLGTHGASGAAGFVQAPLSQQRWVGGSVELHCEAVGSPVPEIQWWFEGQGPNDTCSQLWDGARLDRVHIHATYHQHAASTISIDTLVEEDTGTYECRASNDPDRNHLTRAPRVKWVRAQAVVLVLEPGTVFTTVEDLGSKILLTCSLNDSATEVTGHRWLKGGVVLKEDALPGQKTEFKVDSDDQWGEYSCVFLPEPMGTANIQLHGPPRVKAVKSSEHINEGETAMLVCKSESVPPVTDWAWYKITDSEDKALMNGSESRFFVSSSQGRSELHIENLNMEADPGQYRCNGTSSKGSDQAIITLRVRSHLAALWPFLGIVAEVLVLVTIIFIYEKRRKPEDVLDDDDAGSAPLKSSGQHQNDKGKNVRQRNSS.

The first 21 residues, 1-21 (MAAALFVLLGFALLGTHGASG), serve as a signal peptide directing secretion. In terms of domain architecture, Ig-like spans 37–120 (GGSVELHCEA…SNDPDRNHLT (84 aa)). Cystine bridges form between cysteine 44-cysteine 108, cysteine 157-cysteine 203, and cysteine 242-cysteine 301. Positions 138–219 (EPGTVFTTVE…MGTANIQLHG (82 aa)) constitute an Ig-like C2-type domain. The Extracellular portion of the chain corresponds to 138 to 323 (EPGTVFTTVE…ITLRVRSHLA (186 aa)). An N-linked (GlcNAc...) asparagine glycan is attached at asparagine 160. The segment at 195-199 (DDQWG) is essential for interaction with KDR/VEGFR2. An Ig-like V-type domain is found at 221 to 315 (PRVKAVKSSE…SKGSDQAIIT (95 aa)). 2 N-linked (GlcNAc...) asparagine glycosylation sites follow: asparagine 268 and asparagine 302. A helical transmembrane segment spans residues 324-344 (ALWPFLGIVAEVLVLVTIIFI). Topologically, residues 345 to 385 (YEKRRKPEDVLDDDDAGSAPLKSSGQHQNDKGKNVRQRNSS) are cytoplasmic. A disordered region spans residues 353–385 (DVLDDDDAGSAPLKSSGQHQNDKGKNVRQRNSS). Residues serine 362 and serine 368 each carry the phosphoserine modification.

Homooligomer. Interacts with NXNL1. Interacts with SLC2A1 and SLC16A1/GLUT1. Interacts with XKR8; promoting its localization at the cell membrane. As to quaternary structure, (Microbial infection) Interacts with P.falciparum (isolate 3D7) RH5/PfRH5; the interaction is required for the invasion of the host erythrocytes by the parasite at the merozoite stage. In terms of assembly, homooligomer. Forms heterooligomers with isoform 3. Interacts with VEGFA and KDR/VEGFR2. Interacts with PPIA/CYPA. Interacts with PPIL2; regulates BSG transport to the cell membrane. Interacts with SLC16A1; interaction mediates SLC16A3 targeting to the plasma membrane. Interacts with SLC16A12. Interacts with SLC16A11. Interacts with AJAP1. Interacts with SLC1A3, ATP1B2, MAG and L1CAM. Interacts with SLC16A3; interaction mediates SLC16A3 targeting to the plasma membrane. (Microbial infection) Interacts with P.falciparum (isolates 3D7 or 7G8) RH5/PfRH5; the interaction is required for the invasion of the host erythrocytes by the parasite at the merozoite stage. As to quaternary structure, (Microbial infection) Does not interact with severe acute respiratory syndrome coronavirus 2 (SARS-CoV-2) spike glycoprotein, even if previous works were based on a putative interaction. In terms of assembly, forms heterooligomers with isoform 2. Interacts with SLC16A6; this interaction mediates targeting to the plasma membrane. In terms of processing, N-glycosylated. In terms of tissue distribution, retina-specific. Expressed in retinal cone photoreceptors (at protein level). As to expression, expressed in erythrocytes (at protein level). Highly expressed in melanoma cell lines (at protein level). Highly expressed in the heart, kidney, skeletal muscle and testis. Highly expressed in the bone marrow, fetal liver, lung, testis and thymus.

The protein resides in the melanosome. It is found in the cell membrane. The protein localises to the photoreceptor inner segment. It localises to the cell projection. Its subcellular location is the cilium. The protein resides in the photoreceptor outer segment. It is found in the endosome. The protein localises to the endoplasmic reticulum membrane. It localises to the basolateral cell membrane. Essential for normal retinal maturation and development. Acts as a retinal cell surface receptor for NXNL1 and plays an important role in NXNL1-mediated survival of retinal cone photoreceptors. In association with glucose transporter SLC16A1/GLUT1 and NXNL1, promotes retinal cone survival by enhancing aerobic glycolysis and accelerating the entry of glucose into photoreceptors. May act as a potent stimulator of IL6 secretion in multiple cell lines that include monocytes. In terms of biological role, (Microbial infection) Erythrocyte receptor for P.falciparum RH5 which is essential for erythrocyte invasion by the merozoite stage of P.falciparum isolates 3D7 and Dd2. Functionally, signaling receptor for cyclophilins, essential for PPIA/CYPA and PPIB/CYPB-dependent signaling related to chemotaxis and adhesion of immune cells. Plays an important role in targeting monocarboxylate transporters SLC16A1/GLUT1, SLC16A11 and SLC16A12 to the plasma membrane. Acts as a coreceptor for vascular endothelial growth factor receptor 2 (KDR/VEGFR2) in endothelial cells enhancing its VEGFA-mediated activation and downstream signaling. Promotes angiogenesis through EPAS1/HIF2A-mediated up-regulation of VEGFA (isoform VEGF-165 and VEGF-121) and KDR/VEGFR2 in endothelial cells. Plays a key role in regulating tumor growth, invasion, metastasis and neoangiogenesis by stimulating the production and release of extracellular matrix metalloproteinases and KDR/VEGFR2 by both tumor cells and stromal cells (fibroblasts and endothelial cells). Its function is as follows. (Microbial infection) Erythrocyte receptor for P.falciparum RH5 which is essential for erythrocyte invasion by the merozoite stage of P.falciparum isolates 3D7, Dd2, 7G8 and HB3. Binding of P.falciparum RH5 results in BSG dimerization which triggers an increase in intracellular Ca(2+) in the erythrocyte. This essential step leads to a rearrangement of the erythrocyte cytoskeleton required for the merozoite invasion. (Microbial infection) Can facilitate human SARS coronavirus (SARS-CoV-1) infection via its interaction with virus-associated PPIA/CYPA. In terms of biological role, (Microbial infection) Can facilitate HIV-1 infection via its interaction with virus-associated PPIA/CYPA. Functionally, (Microbial infection) First described as a receptor for severe acute respiratory syndrome coronavirus 2 (SARS-CoV-2), it is not required for SARS-CoV-2 infection. Its function is as follows. (Microbial infection) Acts as a receptor for measles virus. (Microbial infection) Promotes entry of pentamer-expressing human cytomegalovirus (HCMV) into epithelial and endothelial cells. The protein is Basigin of Homo sapiens (Human).